We begin with the raw amino-acid sequence, 871 residues long: Protein arg-6, mitochondrial (871 aa).

A mitochondrion-targeting transit peptide spans 1–44; sequence MYSACAVALRAGARRVVRRVPKSARALPRAAAARRQISTTAARS. The N-acetyltransferase domain maps to 336 to 488; it reads QASTSLSEFK…DFTENGRAML (153 aa). The active site involves C689.

The protein in the N-terminal section; belongs to the acetylglutamate kinase family. In the C-terminal section; belongs to the NAGSA dehydrogenase family. The protein precursor is cleaved into the two biologically active enzymes, the kinase and the reductase.

It localises to the mitochondrion. It catalyses the reaction N-acetyl-L-glutamate 5-semialdehyde + phosphate + NADP(+) = N-acetyl-L-glutamyl 5-phosphate + NADPH + H(+). The enzyme catalyses N-acetyl-L-glutamate + ATP = N-acetyl-L-glutamyl 5-phosphate + ADP. It functions in the pathway amino-acid biosynthesis; L-arginine biosynthesis; N(2)-acetyl-L-ornithine from L-glutamate: step 2/4. Its pathway is amino-acid biosynthesis; L-arginine biosynthesis; N(2)-acetyl-L-ornithine from L-glutamate: step 3/4. The polypeptide is Protein arg-6, mitochondrial (arg-6) (Neurospora crassa (strain ATCC 24698 / 74-OR23-1A / CBS 708.71 / DSM 1257 / FGSC 987)).